The sequence spans 295 residues: ATP synthase gamma chain (295 aa).

This sequence belongs to the ATPase gamma chain family. In terms of assembly, F-type ATPases have 2 components, CF(1) - the catalytic core - and CF(0) - the membrane proton channel. CF(1) has five subunits: alpha(3), beta(3), gamma(1), delta(1), epsilon(1). CF(0) has three main subunits: a, b and c.

The protein resides in the cell membrane. Its function is as follows. Produces ATP from ADP in the presence of a proton gradient across the membrane. The gamma chain is believed to be important in regulating ATPase activity and the flow of protons through the CF(0) complex. This is ATP synthase gamma chain from Acetivibrio thermocellus (strain ATCC 27405 / DSM 1237 / JCM 9322 / NBRC 103400 / NCIMB 10682 / NRRL B-4536 / VPI 7372) (Clostridium thermocellum).